A 726-amino-acid polypeptide reads, in one-letter code: Delta-1-pyrroline-5-carboxylate synthase B (726 aa).

A glutamate 5-kinase region spans residues 1–296 (MTEIDRSRAF…WAPVVDTTSR (296 aa)). Ser-60, Asp-157, and Asn-176 together coordinate substrate. Residues 196-197 (SD) and 236-242 (RGGMTAK) contribute to the ATP site. The gamma-glutamyl phosphate reductase stretch occupies residues 297 to 717 (DMAVAARESS…YTHKDLPVLQ (421 aa)).

The protein in the N-terminal section; belongs to the glutamate 5-kinase family. This sequence in the C-terminal section; belongs to the gamma-glutamyl phosphate reductase family.

It carries out the reaction L-glutamate + ATP = L-glutamyl 5-phosphate + ADP. The enzyme catalyses L-glutamate 5-semialdehyde + phosphate + NADP(+) = L-glutamyl 5-phosphate + NADPH + H(+). It functions in the pathway amino-acid biosynthesis; L-proline biosynthesis; L-glutamate 5-semialdehyde from L-glutamate: step 1/2. Its pathway is amino-acid biosynthesis; L-proline biosynthesis; L-glutamate 5-semialdehyde from L-glutamate: step 2/2. Its function is as follows. P5CS plays a key role in proline biosynthesis, leading to osmoregulation in plants. In Arabidopsis thaliana (Mouse-ear cress), this protein is Delta-1-pyrroline-5-carboxylate synthase B (P5CSB).